Reading from the N-terminus, the 231-residue chain is MIP18 family protein YHR122W (231 aa).

Disordered regions lie at residues Met1–Lys26 and Leu75–Glu100. At Ser2 the chain carries N-acetylserine. The span at Thr76–Ser90 shows a compositional bias: acidic residues.

The protein belongs to the MIP18 family.

Functionally, may play a role in chromosome segregation through establishment of sister chromatid cohesion. This chain is MIP18 family protein YHR122W, found in Saccharomyces cerevisiae (strain ATCC 204508 / S288c) (Baker's yeast).